We begin with the raw amino-acid sequence, 163 residues long: Phosphopantetheine adenylyltransferase (163 aa).

Residue serine 11 coordinates substrate. ATP is bound by residues 11–12 (SF) and histidine 19. The substrate site is built by lysine 43, leucine 75, and arginine 89. Residues 90 to 92 (GLR), glutamate 100, and 125 to 131 (YSFLSSS) each bind ATP.

The protein belongs to the bacterial CoaD family. Homohexamer. The cofactor is Mg(2+).

The protein resides in the cytoplasm. It catalyses the reaction (R)-4'-phosphopantetheine + ATP + H(+) = 3'-dephospho-CoA + diphosphate. It functions in the pathway cofactor biosynthesis; coenzyme A biosynthesis; CoA from (R)-pantothenate: step 4/5. In terms of biological role, reversibly transfers an adenylyl group from ATP to 4'-phosphopantetheine, yielding dephospho-CoA (dPCoA) and pyrophosphate. This chain is Phosphopantetheine adenylyltransferase, found in Lysinibacillus sphaericus (strain C3-41).